The primary structure comprises 331 residues: MLDIAMPKLECVAAAENYGRFKIEPLDPGYGHTLGNALRRVLLSSIPGAAVIKIKIDGIFHEFSPIQGVREDATEIVLNVKGIRLRSYAERPVKMILSKTGPGVVRASDIECPSNVEIVNPDHYIATLDSSDARLDMELTVERHRGYLPAENRDPVPIGEIPVDAIFTPVHKVNYVVEHTRIGGMTDFDRLLLEIWTDGTVKPGDALSYAAQVLVQYSSIIADFNRFDDEQEQVGDANGLVIPSEIYDMPIEDLDLSTRTYNCLKRADITKVGQVLEMDEKQLLAVRNLGQKSMDEIREKLIERNLLPTLPFNSAILNTNVAARLNDGSAE.

The segment at 1-225 (MLDIAMPKLE…QYSSIIADFN (225 aa)) is alpha N-terminal domain (alpha-NTD). The interval 243 to 331 (PSEIYDMPIE…AARLNDGSAE (89 aa)) is alpha C-terminal domain (alpha-CTD).

This sequence belongs to the RNA polymerase alpha chain family. Homodimer. The RNAP catalytic core consists of 2 alpha, 1 beta, 1 beta' and 1 omega subunit. When a sigma factor is associated with the core the holoenzyme is formed, which can initiate transcription.

The enzyme catalyses RNA(n) + a ribonucleoside 5'-triphosphate = RNA(n+1) + diphosphate. DNA-dependent RNA polymerase catalyzes the transcription of DNA into RNA using the four ribonucleoside triphosphates as substrates. The chain is DNA-directed RNA polymerase subunit alpha from Herpetosiphon aurantiacus (strain ATCC 23779 / DSM 785 / 114-95).